We begin with the raw amino-acid sequence, 258 residues long: Type III pantothenate kinase (258 aa).

12 to 19 contributes to the ATP binding site; the sequence is DIGNTSIA. Residues Tyr94 and 109 to 112 each bind substrate; that span reads GSDV. Residue Asp111 is the Proton acceptor of the active site. Asp132 serves as a coordination point for K(+). Thr135 serves as a coordination point for ATP. Thr187 contributes to the substrate binding site.

Belongs to the type III pantothenate kinase family. Homodimer. Requires NH4(+) as cofactor. The cofactor is K(+).

The protein resides in the cytoplasm. It carries out the reaction (R)-pantothenate + ATP = (R)-4'-phosphopantothenate + ADP + H(+). It functions in the pathway cofactor biosynthesis; coenzyme A biosynthesis; CoA from (R)-pantothenate: step 1/5. Functionally, catalyzes the phosphorylation of pantothenate (Pan), the first step in CoA biosynthesis. The protein is Type III pantothenate kinase of Borreliella afzelii (strain PKo) (Borrelia afzelii).